A 208-amino-acid polypeptide reads, in one-letter code: Superoxide dismutase [Mn] 2 (208 aa).

Mn(2+) is bound by residues H28, H83, D165, and H169.

Belongs to the iron/manganese superoxide dismutase family. As to quaternary structure, homodimer. The cofactor is Mn(2+).

It carries out the reaction 2 superoxide + 2 H(+) = H2O2 + O2. Destroys superoxide anion radicals which are normally produced within the cells and which are toxic to biological systems. In Bacillus anthracis, this protein is Superoxide dismutase [Mn] 2 (sodA2).